A 199-amino-acid chain; its full sequence is 3-hexulose-6-phosphate isomerase (199 aa).

An SIS domain is found at 44-186 (LARQIVQPGR…FQSLWDHTEV (143 aa)). Substrate is bound by residues S62 and 101–106 (SGSGTT). E166 functions as the Proton acceptor in the catalytic mechanism.

Belongs to the SIS family. PHI subfamily.

It catalyses the reaction D-arabino-hex-3-ulose 6-phosphate = beta-D-fructose 6-phosphate. It functions in the pathway one-carbon metabolism; formaldehyde assimilation via RuMP pathway; D-fructose 6-phosphate from D-ribulose 5-phosphate and formaldehyde: step 2/2. Functionally, catalyzes the isomerization between 3-hexulose 6-phosphate and fructose 6-phosphate. This Mycobacterium gastri protein is 3-hexulose-6-phosphate isomerase (rmpB).